A 2748-amino-acid polypeptide reads, in one-letter code: Chalcone synthase cfoA (2748 aa).

Residues 13–511 form an adenylation (A) domain region; it reads RHAGESCEKV…DTVPRTVIGK (499 aa). Positions 535-620 constitute a Carrier 1 domain; the sequence is DLIEALVMAE…AVSTYLHGRL (86 aa). At Ser-579 the chain carries O-(pantetheine 4'-phosphoryl)serine. The Ketosynthase family 3 (KS3) domain maps to 641 to 1073; sequence VEPIAIVSMA…GTNSHIILEQ (433 aa). Active-site for beta-ketoacyl synthase activity residues include Cys-813, His-948, and His-995. A Malonyl-CoA:ACP transacylase (MAT) domain is found at 1196-1489; that stretch reads FSGQGSWMPT…ATHGTVDKLL (294 aa). The segment at 1561–1842 is dehydratase (DH) domain; that stretch reads LGHEMIFNAT…ENSFSMTMTD (282 aa). The N-terminal hotdog fold stretch occupies residues 1563–1707; the sequence is HEMIFNATSI…GTFQLISQPN (145 aa). The PKS/mFAS DH domain maps to 1563–1866; the sequence is HEMIFNATSI…LRTWQPTVAG (304 aa). His-1595 (proton acceptor; for dehydratase activity) is an active-site residue. A C-terminal hotdog fold region spans residues 1722 to 1866; that stretch reads AESDVNISEA…LRTWQPTVAG (145 aa). Asp-1784 (proton donor; for dehydratase activity) is an active-site residue. Residues 2031–2210 enclose the Ketoreductase (KR) domain; sequence GTVLITGGTG…ALSLAWGPWA (180 aa). Positions 2305-2383 constitute a Carrier 2 domain; sequence NRHDTLLGLV…ALVEYLLPRI (79 aa). Position 2342 is an O-(pantetheine 4'-phosphoryl)serine (Ser-2342). Residues 2386-2426 form a disordered region; the sequence is EPQPEVDTDSDASTTAGDTSVSRDSGKEDELSPSSSVTTLA. The span at 2396 to 2407 shows a compositional bias: low complexity; it reads DASTTAGDTSVS. A thioester reductase (TE) domain region spans residues 2519–2742; the sequence is VGLSVYSNLA…GAAGEIERWA (224 aa).

The protein in the N-terminal section; belongs to the NRP synthetase family. The cofactor is pantetheine 4'-phosphate.

The protein operates within secondary metabolite biosynthesis; flavonoid biosynthesis. Its function is as follows. Hybrid PKS-NRPS synthetase; part of the gene cluster that mediates the biosynthesis of chlorflavonin, a fungal flavonoid with acetolactate synthase inhibitory activity. Within the pathway, the PKS-NRPS cfoA, is responsible for the generation of the key precursor chalcone. The adenylation (A) domain activates benzoic acid or p-hydroxybenzoic acid which are transferred to the thiol group of the pantetheinyl residue of the T domain, and further transferred to the adjacent PKS portion of cfoA. Within the PKS portion of cfoA, benzoic acid or p-hydroxybenzoic acid act as starter units for respectively four malonyl-CoA molecules for elongation by the AT and KS domains. Afterwards, chalcone is cyclized through Claisen condensation and thereby released either spontaneously or catalyzed by the TE domain. Then, a new type of chalcone isomerase, cfoK, catalyzes the conversion of the chalcone into a flavanone by a histidine-mediated oxa-Michael addition mechanism. The desaturation of flavanone to flavone is catalyzed by a new type of flavone synthase, the flavin mononucleotide (FMN)-dependent oxidoreductase cfoJ. Monooxygenases cfoF, cfoG, and P450 cfoH are responsible for the hydroxylation of the flavonoid skeleton at sites C3, C8, and C2', respectively. Like cfoF, the dehydratase cfoI plays also a role in the hydroxylation of position C3. Methyltransferases cfoB, cfoC, and cfoD then catalyze the methylation of C7-OH, C8-OH, and C3-OH, respectively. Finally, the monooxygenase cfoE is responsible for the chlorination of flavonoid at position C3'. The chain is Chalcone synthase cfoA from Aspergillus candidus.